Consider the following 49-residue polypeptide: U6-myrmicitoxin-Mri1a (49 aa).

The first 27 residues, 1-27, serve as a signal peptide directing secretion; it reads MNPKALCSFLLATFLLLTVTIMPSVHA. Residues 28–35 constitute a propeptide that is removed on maturation; sequence NAEANADA.

Post-translationally, contains 1 disulfide bond. Expressed by the venom gland.

Its subcellular location is the secreted. This chain is U6-myrmicitoxin-Mri1a, found in Manica rubida (European giant red ant).